The primary structure comprises 1191 residues: Puratrophin-1 (1191 aa).

Disordered regions lie at residues 1-152 and 707-728; these read MERP…DPVG and AGGG…SDPR. Residue S64 is modified to Phosphoserine. The segment covering 111-120 has biased composition (polar residues); sequence SHLSLAQGES. Positions 732–908 constitute a DH domain; it reads RLQLVLAEMV…HFQLRHGNDL (177 aa). Positions 920-1027 constitute a PH domain; that stretch reads NLKEQGQLVR…WTADISHLLW (108 aa). The interval 1150 to 1176 is disordered; sequence SLTAEDSEISSQCPSASGSSGSDSSCV. The segment covering 1159–1176 has biased composition (low complexity); that stretch reads SSQCPSASGSSGSDSSCV.

In terms of tissue distribution, expressed in kidney, Leydig cells in the testis, epithelial cells in the prostate gland and Langerhans islet in the pancreas. Isoform 1 and isoform 3 are strongly expressed in Purkinje cells and to a lower extent in other neurons (at protein level). Widely expressed at low levels. More strongly expressed in testis and pancreas.

Its function is as follows. Possible role in intracellular signaling and cytoskeleton dynamics at the Golgi. The protein is Puratrophin-1 (PLEKHG4) of Homo sapiens (Human).